Reading from the N-terminus, the 727-residue chain is Pollen-specific leucine-rich repeat extensin-like protein 3 (727 aa).

The N-terminal stretch at 1-22 (MPHIYKQPLGIFQGFVPTLTDA) is a signal peptide. One copy of the LRR 1 repeat lies at 19 to 43 (LTDAEVSFIAQRQLLTLPENGELPD). The N-linked (GlcNAc...) asparagine glycan is linked to Asn80. 9 LRR repeats span residues 107–131 (VAVVAGVDLNGADIAGHLPAELGLM), 132–154 (TDVAMFHLNSNRFCGIIPKSFEK), 156–179 (SLMHEFDVSNNRFVGPFPSVVLSW), 180–202 (PAVKFIDVRYNDFEGQVPPELFK), 203–226 (KDLDAIFLNNNRFTSTIPDSLGES), 228–249 (ASVVTFAHNKFSGCIPRSIGNM), 250–273 (KNLNEIIFKDNSLGGCFPSEIGKL), 275–296 (NVNVFDASMNSFTGVLPPSFVG), and 297–321 (LTSMEEFDISGNKLTGFIPENICKL). N-linked (GlcNAc...) asparagine glycosylation occurs at Asn326. A disordered region spans residues 381-727 (SKDKCAGGSS…SPPPPMFQGY (347 aa)). Composition is skewed to pro residues over residues 397-419 (SPSPVPTRPVHKPQPPKESPQPN), 446-457 (SPPPASSPPTSP), 466-479 (VHKPQPPKESPQPN), 492-677 (SPPP…PKMS), and 718-727 (SPPPPMFQGY). Positions 432 to 727 (SPPPPQQPHH…SPPPPMFQGY (296 aa)) are contains the Ser-Pro(4) repeats.

In terms of processing, hydroxylated on proline residues in the S-P-P-P-P repeat. O-glycosylated on hydroxyprolines. In terms of tissue distribution, expressed in flowers, stamen, pollen, and pollinated carpels.

It is found in the secreted. It localises to the cell wall. Modulates cell morphogenesis by regulating cell wall formation and assembly, and/or growth polarization. This is Pollen-specific leucine-rich repeat extensin-like protein 3 (PEX3) from Arabidopsis thaliana (Mouse-ear cress).